Here is a 113-residue protein sequence, read N- to C-terminus: Hydrogenase maturation factor HypA (113 aa).

Residue histidine 2 participates in Ni(2+) binding. Residues cysteine 73, cysteine 76, cysteine 89, and cysteine 92 each contribute to the Zn(2+) site.

Belongs to the HypA/HybF family.

Involved in the maturation of [NiFe] hydrogenases. Required for nickel insertion into the metal center of the hydrogenase. The sequence is that of Hydrogenase maturation factor HypA from Legionella pneumophila (strain Paris).